A 190-amino-acid polypeptide reads, in one-letter code: (S)-2-hydroxypropylphosphonic acid epoxidase (190 aa).

The region spanning 10–60 (KAHLEALLATRKMTLEHLQDVRHDATQVYFDGLEHLQNVAQYLAIPLSEFF) is the HTH cro/C1-type domain. The H-T-H motif DNA-binding region spans 20–40 (RKMTLEHLQDVRHDATQVYFD). Substrate is bound by residues R87, Y95, 125–128 (NGGH), and E132. The Fe cation site is built by H128, E132, and H171. The 49-residue stretch at 128 to 176 (HGSREIVYVTRGAVRVRWVGDNDELKEDVLNEGDSIFILPNVPHSFTNH) folds into the Cupin type-2 domain.

This sequence belongs to the non-heme iron-dependent dioxygenase family. As to quaternary structure, homotrimer. Fe(2+) serves as cofactor.

It catalyses the reaction (S)-2-hydroxypropylphosphonate + H2O2 = (1R,2S)-epoxypropylphosphonate + 2 H2O. Its pathway is antibiotic biosynthesis; fosfomycin biosynthesis. Non-heme-dependent dioxygenase that catalyzes the oxidative epoxidation of (S)-2-hydroxypropylphosphonate into (1R,2S)-epoxypropylphosphonate, the final step in the biosynthesis of fosfomycin antibiotic. This is (S)-2-hydroxypropylphosphonic acid epoxidase (hppE) from Pseudomonas syringae.